The sequence spans 479 residues: MNKCIPMIINGMIQDFDNYAYKEVKLNNDNRVKLSVITESSVSKTLNIKDRINLNLNQIVNFLYTVGQRWKSEEYNRRRTYIRELKTYLGYSDEMARLEANWIAMLLCSKSALYDIVNYDLGSIHVLDEWLPRGDCYVKAQPKGVSVHLLAGNVPLSGVTSILRAILTKNECIIKTSSSDPFTANALVSSFIDVNADHPITKSMSVMYWPHDEDMTLSQRIMNHADVVIAWGGDEAIKWAVKYSPPHVDILKFGPKKSLSIIEAPKDIEAAAMGVAHDICFYDQQACFSTQDVYYIGDNLPLFLNELEKQLDRYAKILPKGSNSFDEKAAFTLTEKESLFAGYEVRKGDKQAWLIVVSPTNSFGNQPLSRSVYVHQVSDIKEIIPFVNKNRTQTVSIYPWEASLKYRDKLARSGVERIVESGMNNIFRVGGAHDSLSPLQYLVRFVSHERPFNYTTKDVAVEIEQTRYLEEDKFLVFVP.

This sequence belongs to the LuxC family.

It catalyses the reaction a long-chain fatty aldehyde + NADP(+) + CoA = a long-chain fatty acyl-CoA + NADPH + H(+). The protein operates within lipid metabolism; fatty acid reduction for biolumincescence. Its function is as follows. LuxC is the fatty acid reductase enzyme responsible for synthesis of the aldehyde substrate for the luminescent reaction catalyzed by luciferase. This is Long-chain acyl-protein thioester reductase (luxC) from Aliivibrio fischeri (Vibrio fischeri).